We begin with the raw amino-acid sequence, 274 residues long: 5'-3' exoribonuclease (274 aa).

Mn(2+) is bound by residues His8, His10, Asp15, His40, Glu65, His76, His190, Asp247, and His249.

It belongs to the PHP family. TrpH/YciV subfamily. It depends on Mn(2+) as a cofactor.

It catalyses the reaction a ribonucleoside 3',5'-bisphosphate + H2O = a ribonucleoside 5'-phosphate + phosphate. Functionally, efficiently catalyzes the hydrolysis of the 3'-phosphate from 3',5'-bis-phosphonucleotides as well as the successive hydrolysis of 5'-phosphomononucleotides from the 5'-end of short pieces of RNA and DNA, with no specificity toward the identity of the nucleotide base. Is more efficient at hydrolyzing RNA oligonucleotides than DNA oligonucleotides. This enzyme can also hydrolyze annealed DNA duplexes, albeit at a catalytic efficiency lower than that of the corresponding single-stranded oligonucleotides. The protein is 5'-3' exoribonuclease of Haemophilus influenzae (strain ATCC 51907 / DSM 11121 / KW20 / Rd).